A 68-amino-acid polypeptide reads, in one-letter code: Molybdenum-pterin-binding protein 3 (68 aa).

A Mop domain is found at 2-68 (SISARNQLKG…IKSTDVMILA (67 aa)).

Functionally, binds one mole of molybdenum per mole of protein and contains a pterin. In Clostridium pasteurianum, this protein is Molybdenum-pterin-binding protein 3 (mopIII).